The chain runs to 616 residues: Chaperone protein DnaK (616 aa).

At Thr174 the chain carries Phosphothreonine; by autocatalysis. Residues 576-616 form a disordered region; the sequence is QASAPGAGPEGASGGFGGENKKDDNVVDADYTVIDDDKKKT. A compositionally biased stretch (gly residues) spans 583 to 593; that stretch reads GPEGASGGFGG.

Belongs to the heat shock protein 70 family.

Its function is as follows. Acts as a chaperone. The protein is Chaperone protein DnaK of Heliobacterium modesticaldum (strain ATCC 51547 / Ice1).